The chain runs to 149 residues: Large ribosomal subunit protein bL9 (149 aa).

Lysine 89 carries the post-translational modification N6-acetyllysine.

It belongs to the bacterial ribosomal protein bL9 family.

Its function is as follows. Binds to the 23S rRNA. The polypeptide is Large ribosomal subunit protein bL9 (Shigella boydii serotype 18 (strain CDC 3083-94 / BS512)).